The sequence spans 100 residues: Aspartyl/glutamyl-tRNA(Asn/Gln) amidotransferase subunit C (100 aa).

The protein belongs to the GatC family. In terms of assembly, heterotrimer of A, B and C subunits.

The enzyme catalyses L-glutamyl-tRNA(Gln) + L-glutamine + ATP + H2O = L-glutaminyl-tRNA(Gln) + L-glutamate + ADP + phosphate + H(+). The catalysed reaction is L-aspartyl-tRNA(Asn) + L-glutamine + ATP + H2O = L-asparaginyl-tRNA(Asn) + L-glutamate + ADP + phosphate + 2 H(+). Allows the formation of correctly charged Asn-tRNA(Asn) or Gln-tRNA(Gln) through the transamidation of misacylated Asp-tRNA(Asn) or Glu-tRNA(Gln) in organisms which lack either or both of asparaginyl-tRNA or glutaminyl-tRNA synthetases. The reaction takes place in the presence of glutamine and ATP through an activated phospho-Asp-tRNA(Asn) or phospho-Glu-tRNA(Gln). The polypeptide is Aspartyl/glutamyl-tRNA(Asn/Gln) amidotransferase subunit C (Petrotoga mobilis (strain DSM 10674 / SJ95)).